Reading from the N-terminus, the 230-residue chain is 2,3-bisphosphoglycerate-dependent phosphoglycerate mutase (230 aa).

Substrate is bound by residues 8 to 15 (RHGESEWN), 21 to 22 (TG), arginine 60, 87 to 90 (ERHY), lysine 98, 114 to 115 (RR), and 183 to 184 (GN). The Tele-phosphohistidine intermediate role is filled by histidine 9. Glutamate 87 acts as the Proton donor/acceptor in catalysis.

Belongs to the phosphoglycerate mutase family. BPG-dependent PGAM subfamily.

The catalysed reaction is (2R)-2-phosphoglycerate = (2R)-3-phosphoglycerate. It functions in the pathway carbohydrate degradation; glycolysis; pyruvate from D-glyceraldehyde 3-phosphate: step 3/5. Its function is as follows. Catalyzes the interconversion of 2-phosphoglycerate and 3-phosphoglycerate. The polypeptide is 2,3-bisphosphoglycerate-dependent phosphoglycerate mutase (Streptococcus thermophilus (strain CNRZ 1066)).